Here is a 314-residue protein sequence, read N- to C-terminus: Olfactory receptor 5P66 (314 aa).

The Extracellular portion of the chain corresponds to 1 to 28 (MAFLENGNHTAVSEFILLGLTDDPVLRI). N-linked (GlcNAc...) asparagine glycosylation is present at Asn8. The helical transmembrane segment at 29–49 (VLFTIILCIYLVTVSGNLSTI) threads the bilayer. At 50 to 57 (LLIRVSSQ) the chain is on the cytoplasmic side. A helical transmembrane segment spans residues 58 to 78 (LHHPMYFFLSHLASADIGLSS). At 79–102 (SVTPNMLVNFLVERSTISYLGCGI) the chain is on the extracellular side. The cysteines at positions 100 and 192 are disulfide-linked. The helical transmembrane segment at 103–123 (QLSSAALFGATECFLLAAMAY) threads the bilayer. Residues 124 to 136 (DRFMAICNPLLYS) lie on the Cytoplasmic side of the membrane. A helical membrane pass occupies residues 137–157 (TKMSTKVCVQLIVGSYIAGFL). At 158–199 (NASSFLLSFFSLLFCGQNIINDFFCDFAPLAELSCSDVSVFV) the chain is on the extracellular side. Residues 200-220 (VVISFSAGTVTMLTVFVIAIS) form a helical membrane-spanning segment. Over 221-240 (YSYILITILKMRSTEGRQKA) the chain is Cytoplasmic. A helical transmembrane segment spans residues 241 to 261 (FSTCTSHLTAVTLFYGTVTFI). At 262-274 (YVMPKSSYSMDQN) the chain is on the extracellular side. The helical transmembrane segment at 275–295 (KIISVFYMVVVPMLNPLIYSL) threads the bilayer. The Cytoplasmic portion of the chain corresponds to 296 to 314 (RNNEIKGALKRHFDRKTFS).

This sequence belongs to the G-protein coupled receptor 1 family.

The protein resides in the cell membrane. Functionally, potential odorant receptor. The protein is Olfactory receptor 5P66 of Mus musculus (Mouse).